We begin with the raw amino-acid sequence, 682 residues long: Putative L-type lectin-domain containing receptor kinase I.1 (682 aa).

The N-terminal stretch at 1–19 (MAQRLHLLLLLFLICFVNL) is a signal peptide. Residues 20–292 (ISFSSQQDLS…RPKKPEKTSP (273 aa)) lie on the Extracellular side of the membrane. The tract at residues 27–264 (DLSFIYNGFN…YQYILGWSFS (238 aa)) is legume-lectin like. Residues N60, N130, N187, N210, and N231 are each glycosylated (N-linked (GlcNAc...) asparagine). A helical membrane pass occupies residues 293–313 (LLIVLLIILAIIVMVVVGGFY). Topologically, residues 314 to 682 (LYRRKKYAEV…SHTIIYGDGR (369 aa)) are cytoplasmic. The Protein kinase domain occupies 348–622 (FNKDGRLGRG…VQYINRHQRL (275 aa)). ATP is bound by residues 354-362 (LGRGGFGEV) and K376. Catalysis depends on D472, which acts as the Proton acceptor.

In the C-terminal section; belongs to the protein kinase superfamily. Ser/Thr protein kinase family. It in the N-terminal section; belongs to the leguminous lectin family.

It localises to the cell membrane. The catalysed reaction is L-seryl-[protein] + ATP = O-phospho-L-seryl-[protein] + ADP + H(+). It carries out the reaction L-threonyl-[protein] + ATP = O-phospho-L-threonyl-[protein] + ADP + H(+). Its function is as follows. Involved in resistance response to the pathogenic fungus Alternaria brassicicola. The protein is Putative L-type lectin-domain containing receptor kinase I.1 of Arabidopsis thaliana (Mouse-ear cress).